The primary structure comprises 543 residues: Hydroxylamine reductase (543 aa).

4 residues coordinate [4Fe-4S] cluster: cysteine 3, cysteine 6, cysteine 15, and cysteine 21. Hybrid [4Fe-2O-2S] cluster contacts are provided by histidine 239, glutamate 263, cysteine 307, cysteine 398, cysteine 426, cysteine 451, glutamate 486, and lysine 488. Cysteine 398 carries the cysteine persulfide modification.

It belongs to the HCP family. The cofactor is [4Fe-4S] cluster. Hybrid [4Fe-2O-2S] cluster serves as cofactor.

It is found in the cytoplasm. The enzyme catalyses A + NH4(+) + H2O = hydroxylamine + AH2 + H(+). Catalyzes the reduction of hydroxylamine to form NH(3) and H(2)O. The protein is Hydroxylamine reductase of Methanococcus vannielii (strain ATCC 35089 / DSM 1224 / JCM 13029 / OCM 148 / SB).